A 229-amino-acid chain; its full sequence is Cytidylate kinase (229 aa).

Gly10–Thr18 contributes to the ATP binding site.

The protein belongs to the cytidylate kinase family. Type 1 subfamily.

The protein resides in the cytoplasm. It catalyses the reaction CMP + ATP = CDP + ADP. The catalysed reaction is dCMP + ATP = dCDP + ADP. The protein is Cytidylate kinase of Bacteroides fragilis (strain ATCC 25285 / DSM 2151 / CCUG 4856 / JCM 11019 / LMG 10263 / NCTC 9343 / Onslow / VPI 2553 / EN-2).